Here is a 459-residue protein sequence, read N- to C-terminus: tRNA modification GTPase MnmE (459 aa).

3 residues coordinate (6S)-5-formyl-5,6,7,8-tetrahydrofolate: R22, E85, and R124. In terms of domain architecture, TrmE-type G spans 221 to 380 (GLSTVIVGKP…LEIQIRDLFF (160 aa)). A K(+)-binding site is contributed by N231. GTP is bound by residues 231 to 236 (NVGKSS), 250 to 256 (TEVAGTT), and 275 to 278 (DTAG). S235 is a Mg(2+) binding site. K(+) contacts are provided by T250, V252, and T255. T256 provides a ligand contact to Mg(2+). K459 serves as a coordination point for (6S)-5-formyl-5,6,7,8-tetrahydrofolate.

It belongs to the TRAFAC class TrmE-Era-EngA-EngB-Septin-like GTPase superfamily. TrmE GTPase family. As to quaternary structure, homodimer. Heterotetramer of two MnmE and two MnmG subunits. The cofactor is K(+).

It is found in the cytoplasm. In terms of biological role, exhibits a very high intrinsic GTPase hydrolysis rate. Involved in the addition of a carboxymethylaminomethyl (cmnm) group at the wobble position (U34) of certain tRNAs, forming tRNA-cmnm(5)s(2)U34. The protein is tRNA modification GTPase MnmE of Staphylococcus aureus (strain MW2).